A 185-amino-acid chain; its full sequence is Hypoxanthine/guanine phosphoribosyltransferase (185 aa).

It belongs to the purine/pyrimidine phosphoribosyltransferase family. Archaeal HPRT subfamily. As to quaternary structure, homodimer.

It localises to the cytoplasm. The catalysed reaction is IMP + diphosphate = hypoxanthine + 5-phospho-alpha-D-ribose 1-diphosphate. The enzyme catalyses GMP + diphosphate = guanine + 5-phospho-alpha-D-ribose 1-diphosphate. It functions in the pathway purine metabolism; IMP biosynthesis via salvage pathway; IMP from hypoxanthine: step 1/1. Its function is as follows. Catalyzes a salvage reaction resulting in the formation of IMP that is energically less costly than de novo synthesis. In Methanococcus vannielii (strain ATCC 35089 / DSM 1224 / JCM 13029 / OCM 148 / SB), this protein is Hypoxanthine/guanine phosphoribosyltransferase.